Here is a 222-residue protein sequence, read N- to C-terminus: Glutathione S-transferase A1 (222 aa).

Residue M1 is modified to N-acetylmethionine. Position 2 is an N-acetylalanine; in Glutathione S-transferase A1, N-terminally processed (A2). Positions 3–83 constitute a GST N-terminal domain; sequence GKPTLHYFNG…YIATKYNLYG (81 aa). Position 4 is an N6-succinyllysine (K4). Residues Y9, K45, 54 to 55, and 67 to 68 each bind glutathione; these read QV and QT. One can recognise a GST C-terminal domain in the interval 85–208; sequence DMKERALIDM…QPGSQRKPPT (124 aa).

Belongs to the GST superfamily. Alpha family. In terms of assembly, homodimer or heterodimer of GSTA1 and GSTA2. As to expression, expressed in corpus luteum, adrenal gland, testis, liver, lung, thyroid and kidney.

It is found in the cytoplasm. The catalysed reaction is RX + glutathione = an S-substituted glutathione + a halide anion + H(+). The enzyme catalyses prostaglandin A2 + glutathione = prostaglandin A2-S-(R)-glutathione. It catalyses the reaction prostaglandin J2 + glutathione = prostaglandin J2-S-(R)-glutathione. It carries out the reaction (13S)-hydroperoxy-(9Z,11E)-octadecadienoate + 2 glutathione = (13S)-hydroxy-(9Z,11E)-octadecadienoate + glutathione disulfide + H2O. The catalysed reaction is androst-5-ene-3,17-dione = androst-4-ene-3,17-dione. Its function is as follows. Glutathione S-transferase that catalyzes the nucleophilic attack of the sulfur atom of glutathione on the electrophilic groups of a wide range of exogenous and endogenous compounds. Involved in the formation of glutathione conjugates of both prostaglandin A2 (PGA2) and prostaglandin J2 (PGJ2). It also catalyzes the isomerization of D5-androstene-3,17-dione (AD) into D4-androstene-3,17-dione and may therefore play an important role in hormone biosynthesis. Through its glutathione-dependent peroxidase activity toward the fatty acid hydroperoxide (13S)-hydroperoxy-(9Z,11E)-octadecadienoate/13-HPODE it is also involved in the metabolism of oxidized linoleic acid. The sequence is that of Glutathione S-transferase A1 (GSTA1) from Bos taurus (Bovine).